The primary structure comprises 380 residues: Chromo domain-containing protein 2 (380 aa).

2 disordered regions span residues 14-58 and 100-156; these read ISES…SLYG and KLSP…VPLN. Over residues 33–52 the composition is skewed to polar residues; the sequence is NSINNKSSTASLESPQNGSW. Acidic residues predominate over residues 108–119; sequence EDSEDKKEEDES. Over residues 121 to 140 the composition is skewed to low complexity; sequence SYKNEFKSSSSASVSSNFEK. Residues 176–238 enclose the Chromo domain; it reads FAVEMILDSR…SRGGKPDLSS (63 aa). The disordered stretch occupies residues 250–273; it reads SNEASYVEKDESSNSDDSISYKRR.

Its subcellular location is the nucleus. Functionally, component of the kinetochore which plays a role in stabilizing microtubules and so allowing accurate chromosome segregation. In Schizosaccharomyces pombe (strain 972 / ATCC 24843) (Fission yeast), this protein is Chromo domain-containing protein 2 (chp2).